Here is a 342-residue protein sequence, read N- to C-terminus: S-adenosylmethionine:tRNA ribosyltransferase-isomerase (342 aa).

It belongs to the QueA family. As to quaternary structure, monomer.

The protein localises to the cytoplasm. It catalyses the reaction 7-aminomethyl-7-carbaguanosine(34) in tRNA + S-adenosyl-L-methionine = epoxyqueuosine(34) in tRNA + adenine + L-methionine + 2 H(+). It participates in tRNA modification; tRNA-queuosine biosynthesis. Transfers and isomerizes the ribose moiety from AdoMet to the 7-aminomethyl group of 7-deazaguanine (preQ1-tRNA) to give epoxyqueuosine (oQ-tRNA). This Listeria monocytogenes serotype 4b (strain CLIP80459) protein is S-adenosylmethionine:tRNA ribosyltransferase-isomerase.